A 253-amino-acid chain; its full sequence is Putative glutamine amidotransferase PB2B2.05 (253 aa).

One can recognise a Glutamine amidotransferase type-1 domain in the interval 5-228; the sequence is IIALSVGFSN…INRSKWHMKQ (224 aa). Cysteine 100 (nucleophile) is an active-site residue. Catalysis depends on residues histidine 200 and glutamate 202.

It is found in the cytoplasm. The protein localises to the nucleus. The polypeptide is Putative glutamine amidotransferase PB2B2.05 (Schizosaccharomyces pombe (strain 972 / ATCC 24843) (Fission yeast)).